Consider the following 89-residue polypeptide: Small ribosomal subunit protein uS15 (89 aa).

The protein belongs to the universal ribosomal protein uS15 family. Part of the 30S ribosomal subunit. Forms a bridge to the 50S subunit in the 70S ribosome, contacting the 23S rRNA.

Functionally, one of the primary rRNA binding proteins, it binds directly to 16S rRNA where it helps nucleate assembly of the platform of the 30S subunit by binding and bridging several RNA helices of the 16S rRNA. In terms of biological role, forms an intersubunit bridge (bridge B4) with the 23S rRNA of the 50S subunit in the ribosome. The sequence is that of Small ribosomal subunit protein uS15 from Pseudomonas putida (strain GB-1).